The following is a 343-amino-acid chain: tRNA N6-adenosine threonylcarbamoyltransferase (343 aa).

Residues H108 and H112 each coordinate Fe cation. Substrate is bound by residues 129–133 (LISGG), D161, E178, and S258. Residue D286 participates in Fe cation binding.

The protein belongs to the KAE1 / TsaD family. Requires Fe(2+) as cofactor.

The protein resides in the cytoplasm. The enzyme catalyses L-threonylcarbamoyladenylate + adenosine(37) in tRNA = N(6)-L-threonylcarbamoyladenosine(37) in tRNA + AMP + H(+). Required for the formation of a threonylcarbamoyl group on adenosine at position 37 (t(6)A37) in tRNAs that read codons beginning with adenine. Is probably involved in the transfer of the threonylcarbamoyl moiety of threonylcarbamoyl-AMP (TC-AMP) to the N6 group of A37. This Pyrobaculum aerophilum (strain ATCC 51768 / DSM 7523 / JCM 9630 / CIP 104966 / NBRC 100827 / IM2) protein is tRNA N6-adenosine threonylcarbamoyltransferase.